We begin with the raw amino-acid sequence, 183 residues long: Peptidyl-tRNA hydrolase (183 aa).

Tyrosine 14 contacts tRNA. The active-site Proton acceptor is the histidine 19. The tRNA site is built by phenylalanine 64 and asparagine 66.

It belongs to the PTH family. Monomer.

It is found in the cytoplasm. It catalyses the reaction an N-acyl-L-alpha-aminoacyl-tRNA + H2O = an N-acyl-L-amino acid + a tRNA + H(+). In terms of biological role, hydrolyzes ribosome-free peptidyl-tRNAs (with 1 or more amino acids incorporated), which drop off the ribosome during protein synthesis, or as a result of ribosome stalling. Catalyzes the release of premature peptidyl moieties from peptidyl-tRNA molecules trapped in stalled 50S ribosomal subunits, and thus maintains levels of free tRNAs and 50S ribosomes. This chain is Peptidyl-tRNA hydrolase, found in Syntrophomonas wolfei subsp. wolfei (strain DSM 2245B / Goettingen).